The sequence spans 201 residues: MTLVIGLTGGIASGKSTVAQMFQQCGITVVDADVIAKEAVEQGMPAYQKIAETFGEGVLLETGDIDRRKLGEIVFANEEKRLQLNAIVHPEVRKMMIKQRDEAIRAGERFVVLDIPLLYESGLEHLTDKVIVVWVPMELQLERLMKRNRLNKDEALNRIHAQQSLDEKKKRADAVIDNSGSLKDTEAQLHQLLDTWSNIEK.

Residues 4–201 (VIGLTGGIAS…LLDTWSNIEK (198 aa)) form the DPCK domain. ATP is bound at residue 12-17 (ASGKST).

The protein belongs to the CoaE family.

The protein localises to the cytoplasm. The catalysed reaction is 3'-dephospho-CoA + ATP = ADP + CoA + H(+). It functions in the pathway cofactor biosynthesis; coenzyme A biosynthesis; CoA from (R)-pantothenate: step 5/5. Its function is as follows. Catalyzes the phosphorylation of the 3'-hydroxyl group of dephosphocoenzyme A to form coenzyme A. This Bacillus licheniformis (strain ATCC 14580 / DSM 13 / JCM 2505 / CCUG 7422 / NBRC 12200 / NCIMB 9375 / NCTC 10341 / NRRL NRS-1264 / Gibson 46) protein is Dephospho-CoA kinase.